Here is a 247-residue protein sequence, read N- to C-terminus: Triosephosphate isomerase (247 aa).

Substrate is bound by residues asparagine 10 and lysine 12. The active-site Electrophile is the histidine 94. Glutamate 164 acts as the Proton acceptor in catalysis.

The protein belongs to the triosephosphate isomerase family. As to quaternary structure, homodimer.

The protein resides in the cytoplasm. It carries out the reaction D-glyceraldehyde 3-phosphate = dihydroxyacetone phosphate. The enzyme catalyses dihydroxyacetone phosphate = methylglyoxal + phosphate. The protein operates within carbohydrate biosynthesis; gluconeogenesis. It functions in the pathway carbohydrate degradation; glycolysis; D-glyceraldehyde 3-phosphate from glycerone phosphate: step 1/1. Its function is as follows. Triosephosphate isomerase is an extremely efficient metabolic enzyme that catalyzes the interconversion between dihydroxyacetone phosphate (DHAP) and D-glyceraldehyde-3-phosphate (G3P) in glycolysis and gluconeogenesis. It is also responsible for the non-negligible production of methylglyoxal a reactive cytotoxic side-product that modifies and can alter proteins, DNA and lipids. The sequence is that of Triosephosphate isomerase (tpi-1) from Caenorhabditis elegans.